We begin with the raw amino-acid sequence, 383 residues long: Transposase InsI for insertion sequence element IS30C (383 aa).

An Integrase catalytic domain is found at 213-379 (VNGTPIHERS…TPKEIIERGV (167 aa)).

Belongs to the transposase IS30 family.

In terms of biological role, required for the transposition of the insertion element. This is Transposase InsI for insertion sequence element IS30C (insI3) from Escherichia coli (strain K12).